The chain runs to 592 residues: Putative RING finger protein ORF9 (592 aa).

The RING-type zinc-finger motif lies at 12–49; sequence CCICLEEDIERVDTIPCQHTVCRPCYLKPMINKCPVCR. Residues 414 to 441 adopt a coiled-coil conformation; sequence WELIKREELLQRRYKREEQNLKYTSNRL.

The sequence is that of Putative RING finger protein ORF9 from Ostreid herpesvirus 1 (isolate France) (OsHV-1).